The chain runs to 708 residues: F-box only protein 43 (708 aa).

The tract at residues 35-55 (MSQRHSGQAGTEAGNGADSPP) is disordered. Ser76 is subject to Phosphoserine. Thr234 carries the post-translational modification Phosphothreonine. The disordered stretch occupies residues 320-426 (PSPEVRGSIS…ISEGQLSSDE (107 aa)). The segment covering 327-337 (SISTPEDSGFN) has biased composition (polar residues). The residue at position 334 (Ser334) is a Phosphoserine. Residues 374 to 385 (KTRHLGRSRRLS) are compositionally biased toward basic residues. The span at 399 to 411 (EKQIVHPDSEKRA) shows a compositional bias: basic and acidic residues. In terms of domain architecture, F-box spans 490 to 547 (MGIEKLDILTELKYRNLKHILAMVLESLTAESLCSVWKVSRNWREIVVQDKNANRRRK). Residues 636–684 (ALKPCPRCQSPAKYQPYKKRGLCSRTACGFDFCVLCLCAYHGSEECSRG) form a ZBR-type zinc finger. 8 residues coordinate Zn(2+): Cys640, Cys643, Cys658, Cys663, Cys668, Cys671, His676, and Cys681. Residues 682 to 708 (SRGAAKPRNRKDALPGSAQSKRNLKRL) form a disordered region.

In terms of assembly, part of a SCF (SKP1-cullin-F-box) protein ligase complex. According to PubMed:34595750 interaction with SKP1 does not occur. Interacts with ANAPC2; the interaction is direct, ANAPC4, CDC16, CDC23; the interaction is direct, ANAPC10; the interaction is direct and CDC26, during spermatogenesis. May interact with CDC20. Post-translationally, phosphorylated on Ser-76, Thr-234 and Ser-334 in response to calcium, which is a prerequisite for ubiquitination and proteasomal degradation. In terms of processing, ubiquitinated in response to calcium, which promotes proteasomal degradation. As to expression, expressed in the testis.

Its pathway is protein modification; protein ubiquitination. Required to establish and maintain the arrest of oocytes at the second meiotic metaphase until fertilization. Acts by inhibiting the anaphase-promoting complex/cyclosome (APC/C) ubiquitin ligase. Probably recognizes and binds to some phosphorylated proteins and promotes their ubiquitination and degradation. Plays a vital role in modulating the ubiquitilation of CCNB1 and CDK1 during gametogenesis. In Homo sapiens (Human), this protein is F-box only protein 43 (FBXO43).